The following is a 99-amino-acid chain: N(2)-fixation sustaining protein CowN (99 aa).

Belongs to the CowN family.

Functionally, is required to sustain N(2)-dependent growth in the presence of low levels of carbon monoxide (CO). Probably acts by protecting the N(2) fixation ability of the nitrogenase complex, which is inactivated in the presence of CO. This chain is N(2)-fixation sustaining protein CowN, found in Magnetococcus marinus (strain ATCC BAA-1437 / JCM 17883 / MC-1).